We begin with the raw amino-acid sequence, 442 residues long: UDP-N-acetylmuramoylalanine--D-glutamate ligase (442 aa).

113–119 (GSNGKTT) is a binding site for ATP.

Belongs to the MurCDEF family.

It localises to the cytoplasm. The catalysed reaction is UDP-N-acetyl-alpha-D-muramoyl-L-alanine + D-glutamate + ATP = UDP-N-acetyl-alpha-D-muramoyl-L-alanyl-D-glutamate + ADP + phosphate + H(+). It participates in cell wall biogenesis; peptidoglycan biosynthesis. Its function is as follows. Cell wall formation. Catalyzes the addition of glutamate to the nucleotide precursor UDP-N-acetylmuramoyl-L-alanine (UMA). This Coxiella burnetii (strain CbuG_Q212) (Coxiella burnetii (strain Q212)) protein is UDP-N-acetylmuramoylalanine--D-glutamate ligase.